The sequence spans 139 residues: I-Kappa-B like protein N1 (139 aa).

3 ANK repeats span residues 16–48 (NGEN…QYLL), 54–87 (EGRK…DVNG), and 92–122 (TGDT…NINA).

It belongs to the polydnaviridae I-Kappa-B-like protein family.

Suppresses the host immune response through NF-kappa-B inactivation. Possesses ankyrin repeat domain required for NF-kappa-B binding but lack the regulatory regions required for dissociation from NF-kappa-B and degradation. Therefore, prevents host NF-kappa-B release and subsequent activation. This Microplitis demolitor bracovirus (isolate Webb) (MdBV) protein is I-Kappa-B like protein N1 (N2).